The chain runs to 245 residues: Ribosomal RNA small subunit methyltransferase G (245 aa).

Residues Gly-90, Leu-95, 140–141, and Arg-158 contribute to the S-adenosyl-L-methionine site; that span reads AE.

It belongs to the methyltransferase superfamily. RNA methyltransferase RsmG family.

It is found in the cytoplasm. Its function is as follows. Specifically methylates the N7 position of guanine in position 518 of 16S rRNA. This Mycobacterium leprae (strain TN) protein is Ribosomal RNA small subunit methyltransferase G.